We begin with the raw amino-acid sequence, 212 residues long: Ras-related protein Rab-15 (212 aa).

GTP contacts are provided by serine 17, glycine 18, valine 19, glycine 20, lysine 21, threonine 22, cysteine 23, serine 35, serine 39, and threonine 40. Threonine 22 contacts Mg(2+). Short sequence motifs (switch) lie at residues 31-45 and 63-80; these read NEFHSSHISTIGVDF and DTAGQERYQTITKQYYRR. Residues threonine 40 and aspartate 63 each contribute to the Mg(2+) site. Positions 66, 121, 122, 124, 151, and 152 each coordinate GTP. A disordered region spans residues 192–212; that stretch reads ELEEDEGKPEGPANSSKTCWC. Residues cysteine 210 and cysteine 212 are each lipidated (S-geranylgeranyl cysteine). Cysteine 212 carries the cysteine methyl ester modification.

The protein belongs to the small GTPase superfamily. Rab family. In terms of assembly, the GTP bound form of RAB15 interacts with REP15. Interacts (GTP-bound form) with MICAL1, MICAL3, MICALCL, EHBP1 and EHBP1L1. Requires Mg(2+) as cofactor.

The protein localises to the cell membrane. It catalyses the reaction GTP + H2O = GDP + phosphate + H(+). Its activity is regulated as follows. Regulated by guanine nucleotide exchange factors (GEFs) which promote the exchange of bound GDP for free GTP. Regulated by GTPase activating proteins (GAPs) which increase the GTP hydrolysis activity. Inhibited by GDP dissociation inhibitors (GDIs). The small GTPases Rab are key regulators of intracellular membrane trafficking, from the formation of transport vesicles to their fusion with membranes. Rabs cycle between an inactive GDP-bound form and an active GTP-bound form that is able to recruit to membranes different sets of downstream effectors directly responsible for vesicle formation, movement, tethering and fusion. RAB15 may act in concert with RAB3A in regulating aspects of synaptic vesicle membrane flow within the nerve terminal. The sequence is that of Ras-related protein Rab-15 from Mus musculus (Mouse).